A 560-amino-acid chain; its full sequence is MVPHAILARGRDVCRRNGLLILSVLSVIVGCLLGFFLRTRRLSPQEISYFQFPGELLMRMLKMMILPLVVSSLMSGLASLDAKTSSRLGVLTVAYYLWTTFMAVIVGIFMVSIIHPGSAAQKETTEQSGKPIMSSADALLDLIRNMFPANLVEATFKQYRTKTTPVVKSPKVAPEEAPPRRILIYGVQEENGSHVQNFALDLTPPPEVVYKSEPGTSDGMNVLGIVFFSATMGIMLGRMGDSGAPLVSFCQCLNESVMKIVAVAVWYFPFGIVFLIAGKILEMDDPRAVGKKLGFYSVTVVCGLVLHGLFILPLLYFFITKKNPIVFIRGILQALLIALATSSSSATLPITFKCLLENNHIDRRIARFVLPVGATINMDGTALYEAVAAIFIAQVNNYELDFGQIITISITATAASIGAAGIPQAGLVTMVIVLTSVGLPTDDITLIIAVDWALDRFRTMINVLGDALAAGIMAHICRKDFARDTGTEKLLPCETKPVSLQEIVAAQQNGCVKSVAEASELTLGPTCPHHVPVQVEQDEELPAASLNHCTIQISELETNV.

Topologically, residues 1–16 (MVPHAILARGRDVCRR) are cytoplasmic. 3 helical membrane-spanning segments follow: residues 17-37 (NGLLILSVLSVIVGCLLGFFL), 60-80 (MLKMMILPLVVSSLMSGLASL), and 94-114 (AYYLWTTFMAVIVGIFMVSII). Topologically, residues 115-216 (HPGSAAQKET…EVVYKSEPGT (102 aa)) are extracellular. Asparagine 191 carries N-linked (GlcNAc...) asparagine glycosylation. The next 7 helical transmembrane spans lie at 217–237 (SDGMNVLGIVFFSATMGIMLG), 260–280 (IVAVAVWYFPFGIVFLIAGKI), 300–320 (VVCGLVLHGLFILPLLYFFIT), 330–350 (GILQALLIALATSSSSATLPI), 372–392 (VGATINMDGTALYEAVAAIFI), 414–434 (AASIGAAGIPQAGLVTMVIVL), and 457–477 (FRTMINVLGDALAAGIMAHIC).

It belongs to the dicarboxylate/amino acid:cation symporter (DAACS) (TC 2.A.23) family. SLC1A7 subfamily. As to quaternary structure, interacts with the PDZ domains of DLG4. Expressed primarily in retina. Detectable in liver, heart, muscle and brain.

It localises to the photoreceptor inner segment membrane. Its subcellular location is the synaptic cell membrane. It carries out the reaction K(+)(in) + L-glutamate(out) + 3 Na(+)(out) + H(+)(out) = K(+)(out) + L-glutamate(in) + 3 Na(+)(in) + H(+)(in). The catalysed reaction is K(+)(in) + L-aspartate(out) + 3 Na(+)(out) + H(+)(out) = K(+)(out) + L-aspartate(in) + 3 Na(+)(in) + H(+)(in). It catalyses the reaction D-aspartate(out) + K(+)(in) + 3 Na(+)(out) + H(+)(out) = D-aspartate(in) + K(+)(out) + 3 Na(+)(in) + H(+)(in). Its function is as follows. Sodium-dependent, high-affinity amino acid transporter that mediates the uptake of L-glutamate and also L-aspartate and D-aspartate. Functions as a symporter that transports one amino acid molecule together with two or three Na(+) ions and one proton, in parallel with the counter-transport of one K(+) ion. Acts primarily as an inhibitory glutamate-gated chloride channel being a major inhibitory presynaptic receptor at mammalian rod bipolar cell axon terminals. Glutamate binding gates a large Cl(-) conductance that mediates inhibition, affecting visual processing in the retina. This Homo sapiens (Human) protein is Excitatory amino acid transporter 5.